The chain runs to 513 residues: Maturase K (513 aa).

Belongs to the intron maturase 2 family. MatK subfamily.

The protein resides in the plastid. Its subcellular location is the chloroplast. Its function is as follows. Usually encoded in the trnK tRNA gene intron. Probably assists in splicing its own and other chloroplast group II introns. This is Maturase K from Danthonia spicata (Poverty oatgrass).